The primary structure comprises 109 residues: Large ribosomal subunit protein uL24 (109 aa).

This sequence belongs to the universal ribosomal protein uL24 family. In terms of assembly, part of the 50S ribosomal subunit.

Functionally, one of two assembly initiator proteins, it binds directly to the 5'-end of the 23S rRNA, where it nucleates assembly of the 50S subunit. One of the proteins that surrounds the polypeptide exit tunnel on the outside of the subunit. The chain is Large ribosomal subunit protein uL24 from Rickettsia bellii (strain RML369-C).